The sequence spans 442 residues: MSDSAGGRAGLRRYPKLPVWVVEDHQEVLPFIYRAIGSKHLPASNVSFLHFDSHPDLLIPVNMPADTVFDKETLFGELSIENWIMPAVYAGHFSHVIWFHPTWAQQIREGRHHFLVGKDTSTTTIRVTSTDHYFLSDGLYVPEDQLENQKPLQLDVIMVKPYKLCNNQEENDAVSSAKKPKLALEDSENTASTNCDSSSEGLEKDTATQRSDQTCLEPSCSCSSENQECQTAASTGEILEILKKGKAFVLDIDLDFFSVKNPFKEMFTQEEYKILQELYQFKKPGTNLTEEDLVDIVDTRIHQLEDLEATFADLCDGDDEETVQRWASNPGMESLVPLVQSLKKRMEVPDYEMVHQAGLTCDYSELPHHISTEQEIECLIQSVHYLLKNLPNPTLVTIARSSLDDYCPSDQVDTIQEKVLNMLRALYGNLDLQVYAAESPPS.

Residues 175 to 210 (SSAKKPKLALEDSENTASTNCDSSSEGLEKDTATQR) are disordered. Residues 189–200 (NTASTNCDSSSE) show a composition bias toward polar residues.

It belongs to the UPF0489 family.

This is UPF0489 protein C5orf22 (C5orf22) from Homo sapiens (Human).